The following is a 245-amino-acid chain: Protein-L-isoaspartate O-methyltransferase 1 (245 aa).

Residue Ser76 is part of the active site.

This sequence belongs to the methyltransferase superfamily. L-isoaspartyl/D-aspartyl protein methyltransferase family.

The protein localises to the cytoplasm. It catalyses the reaction [protein]-L-isoaspartate + S-adenosyl-L-methionine = [protein]-L-isoaspartate alpha-methyl ester + S-adenosyl-L-homocysteine. Its function is as follows. Catalyzes the methyl esterification of L-isoaspartyl residues in peptides and proteins that result from spontaneous decomposition of normal L-aspartyl and L-asparaginyl residues. It plays a role in the repair and/or degradation of damaged proteins. In Rhodopseudomonas palustris (strain HaA2), this protein is Protein-L-isoaspartate O-methyltransferase 1.